A 378-amino-acid polypeptide reads, in one-letter code: Ferrochelatase (378 aa).

Fe cation contacts are provided by histidine 214 and glutamate 295.

This sequence belongs to the ferrochelatase family.

It localises to the cytoplasm. The catalysed reaction is heme b + 2 H(+) = protoporphyrin IX + Fe(2+). Its pathway is porphyrin-containing compound metabolism; protoheme biosynthesis; protoheme from protoporphyrin-IX: step 1/1. Catalyzes the ferrous insertion into protoporphyrin IX. The protein is Ferrochelatase of Hydrogenovibrio crunogenus (strain DSM 25203 / XCL-2) (Thiomicrospira crunogena).